Reading from the N-terminus, the 328-residue chain is Sin3 histone deacetylase corepressor complex component SDS3 (328 aa).

Positions 1-22 (MSAAGLLAPAPAPAAAPAAPEY) are enriched in low complexity. A disordered region spans residues 1 to 69 (MSAAGLLAPA…HDEEDYVEMK (69 aa)). The residue at position 2 (serine 2) is an N-acetylserine. The mediates interaction with USP17L2 stretch occupies residues 2–170 (SAAGLLAPAP…IENEKLTMEL (169 aa)). Acidic residues-rich tracts occupy residues 23 to 37 (YPED…EDDE) and 45 to 54 (SDEDTEDASE). 2 positions are modified to phosphoserine: serine 32 and serine 45. Position 49 is a phosphothreonine (threonine 49). Serine 53 is subject to Phosphoserine. Over residues 56–69 (DLAKHDEEDYVEMK) the composition is skewed to basic and acidic residues. Residues 66-171 (VEMKEQMYQD…ENEKLTMELT (106 aa)) are a coiled coil. Glycyl lysine isopeptide (Lys-Gly) (interchain with G-Cter in SUMO2) cross-links involve residues lysine 69, lysine 178, and lysine 201. The interval 188–226 (RPNDPVPIPDKRRKPAPAQLNYLLTDEQIMEDLRTLNKL) is sin3 interaction domain (SID). The tract at residues 226 to 252 (LKSPKRPASPSSPEHLPATPAESPAQR) is disordered. 3 positions are modified to phosphoserine: serine 228, serine 234, and serine 237. Residue threonine 244 is modified to Phosphothreonine.

The protein belongs to the SDS3 family. In terms of assembly, interacts with HCFC1. Homodimer. Component of the SIN3 histone deacetylase (HDAC) corepressor complex. Interacts with SIN3A. Interaction with SIN3B enhances the interaction between SIN3B and HDAC1 to form a complex. Component of a mSin3A corepressor complex that contains SIN3A, SAP130, SUDS3/SAP45, ARID4B/SAP180, HDAC1 and HDAC2. Interacts with USP17L2; the interaction is direct. Interacts with FOXK2. Polyubiquitinated. 'Lys-63'-polyubiquitinated SUDS3 positively regulates histone deacetylation. Regulated through deubiquitination by USP17L2/USP17 that cleaves 'Lys-63'-linked ubiquitin chains. In terms of tissue distribution, expressed in all newborn tissues tested, including brain, kidney and liver.

Its subcellular location is the nucleus. Regulatory protein which represses transcription and augments histone deacetylase activity of HDAC1. May have a potential role in tumor suppressor pathways through regulation of apoptosis. May function in the assembly and/or enzymatic activity of the mSin3A corepressor complex or in mediating interactions between the complex and other regulatory complexes. This chain is Sin3 histone deacetylase corepressor complex component SDS3 (Suds3), found in Mus musculus (Mouse).